The following is a 468-amino-acid chain: ATP synthase subunit beta (468 aa).

ATP is bound at residue 153 to 160 (GGAGVGKT).

It belongs to the ATPase alpha/beta chains family. In terms of assembly, F-type ATPases have 2 components, CF(1) - the catalytic core - and CF(0) - the membrane proton channel. CF(1) has five subunits: alpha(3), beta(3), gamma(1), delta(1), epsilon(1). CF(0) has three main subunits: a(1), b(2) and c(9-12). The alpha and beta chains form an alternating ring which encloses part of the gamma chain. CF(1) is attached to CF(0) by a central stalk formed by the gamma and epsilon chains, while a peripheral stalk is formed by the delta and b chains.

The protein resides in the cell membrane. The enzyme catalyses ATP + H2O + 4 H(+)(in) = ADP + phosphate + 5 H(+)(out). Produces ATP from ADP in the presence of a proton gradient across the membrane. The catalytic sites are hosted primarily by the beta subunits. The protein is ATP synthase subunit beta of Ligilactobacillus salivarius (strain UCC118) (Lactobacillus salivarius).